The following is a 160-amino-acid chain: Transcription antitermination protein NusB (160 aa).

This sequence belongs to the NusB family.

Involved in transcription antitermination. Required for transcription of ribosomal RNA (rRNA) genes. Binds specifically to the boxA antiterminator sequence of the ribosomal RNA (rrn) operons. This is Transcription antitermination protein NusB from Rhizobium meliloti (strain 1021) (Ensifer meliloti).